An 83-amino-acid polypeptide reads, in one-letter code: Apolipoprotein C-I (83 aa).

An N-terminal signal peptide occupies residues 1 to 26 (MRLILSLPVLAVVLAMVLEGPAPAQA).

The protein belongs to the apolipoprotein C1 family.

It is found in the secreted. Functionally, inhibitor of lipoprotein binding to the low density lipoprotein (LDL) receptor, LDL receptor-related protein, and very low density lipoprotein (VLDL) receptor. Associates with high density lipoproteins (HDL) and the triacylglycerol-rich lipoproteins in the plasma and makes up about 10% of the protein of the VLDL and 2% of that of HDL. Appears to interfere directly with fatty acid uptake and is also the major plasma inhibitor of cholesteryl ester transfer protein (CETP). Binds free fatty acids and reduces their intracellular esterification. Modulates the interaction of APOE with beta-migrating VLDL and inhibits binding of beta-VLDL to the LDL receptor-related protein. The protein is Apolipoprotein C-I (APOC1) of Eonycteris spelaea (Lesser dawn bat).